Here is a 720-residue protein sequence, read N- to C-terminus: Asp/Glu-specific dipeptidyl-peptidase (720 aa).

An N-terminal signal peptide occupies residues 1-21 (MKKRLLLPLFAALCLSQIAHA). Cys-69 and Cys-86 form a disulfide bridge. Catalysis depends on charge relay system residues His-85, Asp-227, and Ser-655.

This sequence belongs to the peptidase S46 family. Homodimer.

The protein resides in the cell surface. Its activity is regulated as follows. Enzyme activity is completely blocked by diisopropyl-fluorophosphates, moderately by phenylmethylsulfonyl fluoride (PMSF) and 4-(2-methyl)benzenesulfonyl fluoride, and slightly by pepstatin in vitro. Its function is as follows. Catalyzes the removal of dipeptides from the N-terminus of oligopeptides. Shows a strict specificity for acidic residues (Asp or Glu) in the P1 position, and has a hydrophobic residue preference at the P2 position. Preferentially cleaves the synthetic substrate Leu-Asp-methylcoumaryl-7-amide (Leu-Asp-MCA) as compared to Leu-Glu-MCA. Is involved in amino acid metabolism and bacterial growth of asaccharolytic P.gingivalis, that utilizes amino acids from extracellular proteinaceous nutrients as energy and carbon sources. This is Asp/Glu-specific dipeptidyl-peptidase from Porphyromonas gingivalis (strain ATCC 33277 / DSM 20709 / CIP 103683 / JCM 12257 / NCTC 11834 / 2561).